A 268-amino-acid polypeptide reads, in one-letter code: Calpain small subunit 1 (268 aa).

Residue M1 is modified to N-acetylmethionine. S6 carries the post-translational modification Phosphoserine. The EF-hand 1; atypical domain occupies 91–125; that stretch reads EANESEEVRQFRRLFAQLAGDDMEVSATELMNILN. 10 residues coordinate Ca(2+): A109, D112, E114, E119, D137, D152, D154, T156, K158, and E163. 4 consecutive EF-hand domains span residues 139–172, 169–204, 205–233, and 234–268; these read FGIDTCRSMVAVMDSDTTGKLGFEEFKYLWNNIK, NNIKRWQAIYKQFDTDRSGTICSSELPGAFEAAGFH, LNEHLYNMIIRRYSDESGNMDFDNFISCL, and VRLDAMFRAFKSLDKDGTGQIQVNIQEWLQLTMYS. The residue at position 179 (K179) is an N6-acetyllysine. Ca(2+) contacts are provided by D182, D184, S186, T188, E193, and D225.

As to quaternary structure, homodimer or heterodimer of a large (catalytic) and a small (regulatory) subunit. In presence of calcium, the heterodimer dissociates.

The protein resides in the cytoplasm. It localises to the cell membrane. Regulatory subunit of the calcium-regulated non-lysosomal thiol-protease which catalyzes limited proteolysis of substrates involved in cytoskeletal remodeling and signal transduction. Essential for embryonic development. This chain is Calpain small subunit 1 (CAPNS1), found in Homo sapiens (Human).